The chain runs to 284 residues: uncharacterized protein (284 aa).

It belongs to the methyltransferase superfamily.

Its subcellular location is the cytoplasm. The protein localises to the nucleus. Functionally, probable methyltransferase. This is an uncharacterized protein from Schizosaccharomyces pombe (strain 972 / ATCC 24843) (Fission yeast).